A 364-amino-acid chain; its full sequence is Chorismate synthase (364 aa).

Arginine 47 lines the NADP(+) pocket. Residues arginine 124–serine 126, glycine 287, lysine 302–threonine 306, and arginine 328 each bind FMN.

Belongs to the chorismate synthase family. Homotetramer. It depends on FMNH2 as a cofactor.

The enzyme catalyses 5-O-(1-carboxyvinyl)-3-phosphoshikimate = chorismate + phosphate. It functions in the pathway metabolic intermediate biosynthesis; chorismate biosynthesis; chorismate from D-erythrose 4-phosphate and phosphoenolpyruvate: step 7/7. In terms of biological role, catalyzes the anti-1,4-elimination of the C-3 phosphate and the C-6 proR hydrogen from 5-enolpyruvylshikimate-3-phosphate (EPSP) to yield chorismate, which is the branch point compound that serves as the starting substrate for the three terminal pathways of aromatic amino acid biosynthesis. This reaction introduces a second double bond into the aromatic ring system. This chain is Chorismate synthase, found in Prochlorococcus marinus subsp. pastoris (strain CCMP1986 / NIES-2087 / MED4).